The chain runs to 262 residues: Hemin import ATP-binding protein HmuV (262 aa).

Residues 3–244 enclose the ABC transporter domain; the sequence is LQARNLTLAR…DHMRRVYGIE (242 aa). 35-42 is a binding site for ATP; the sequence is GANGAGKS.

This sequence belongs to the ABC transporter superfamily. Heme (hemin) importer (TC 3.A.1.14.5) family. As to quaternary structure, the complex is composed of two ATP-binding proteins (HmuV), two transmembrane proteins (HmuU) and a solute-binding protein (HmuT).

It localises to the cell inner membrane. Part of the ABC transporter complex HmuTUV involved in hemin import. Responsible for energy coupling to the transport system. The chain is Hemin import ATP-binding protein HmuV from Bordetella parapertussis (strain 12822 / ATCC BAA-587 / NCTC 13253).